Consider the following 467-residue polypeptide: MDTAGIRLTPKEIVSKLNEYIVGQNDAKRKVAIALRNRYRRSLLDEESKQEISPKNILMIGPTGVGKTEIARRMAKVVGAPFIKVEATKFTEVGYVGRDVESMVRDLVDVSVRLVKAQKKSLVQDEATAKANEKLVKLLVPSMKKKASQTNNPLESLFGGAIPNFGQNNEDEEEPPTEEIKTKRSEIKRQLEEGKLEKEKVRIKVEQDPGALGMLGTNQNQQMQEMMNQLMPKKKVEREVAVETARKILADSYADELIDQESANQEALELAEQMGIIFIDEIDKVATNNHNSGQDVSRQGVQRDILPILEGSVIQTKYGTVNTEHMLFIGAGAFHVSKPSDLIPELQGRFPLRVELDSLSVEDFVRILTEPKLSLIKQYEALLQTEEVTVNFTDEAITRLAEIAYQVNQDTDNIGARRLHTILEKMLEDLSFEAPSMPNAVVDITPQYVDDKLKSISTNKDLSAFIL.

ATP-binding positions include V22 and 64-69 (GVGKTE). Residues 149 to 192 (QTNNPLESLFGGAIPNFGQNNEDEEEPPTEEIKTKRSEIKRQLE) are disordered. Positions 178–192 (EEIKTKRSEIKRQLE) are enriched in basic and acidic residues. Residues D280, E345, and R417 each coordinate ATP.

This sequence belongs to the ClpX chaperone family. HslU subfamily. A double ring-shaped homohexamer of HslV is capped on each side by a ring-shaped HslU homohexamer. The assembly of the HslU/HslV complex is dependent on binding of ATP.

The protein resides in the cytoplasm. Its function is as follows. ATPase subunit of a proteasome-like degradation complex; this subunit has chaperone activity. The binding of ATP and its subsequent hydrolysis by HslU are essential for unfolding of protein substrates subsequently hydrolyzed by HslV. HslU recognizes the N-terminal part of its protein substrates and unfolds these before they are guided to HslV for hydrolysis. In Staphylococcus aureus (strain bovine RF122 / ET3-1), this protein is ATP-dependent protease ATPase subunit HslU.